A 342-amino-acid chain; its full sequence is Heat-inducible transcription repressor HrcA (342 aa).

It belongs to the HrcA family.

Its function is as follows. Negative regulator of class I heat shock genes (grpE-dnaK-dnaJ and groELS operons). Prevents heat-shock induction of these operons. This Onion yellows phytoplasma (strain OY-M) protein is Heat-inducible transcription repressor HrcA.